The sequence spans 430 residues: Adenylosuccinate synthetase (430 aa).

Residues 13 to 19 and 41 to 43 contribute to the GTP site; these read GDEGKGK and GHT. Residue aspartate 14 is the Proton acceptor of the active site. Positions 14 and 41 each coordinate Mg(2+). IMP contacts are provided by residues 14–17, 39–42, threonine 130, arginine 144, glutamine 225, threonine 240, and arginine 304; these read DEGK and NAGH. Histidine 42 acts as the Proton donor in catalysis. 300 to 306 provides a ligand contact to substrate; sequence ATTGRAR. GTP contacts are provided by residues arginine 306, 332-334, and 414-416; these read KLD and STG.

This sequence belongs to the adenylosuccinate synthetase family. Homodimer. Requires Mg(2+) as cofactor.

It is found in the cytoplasm. The catalysed reaction is IMP + L-aspartate + GTP = N(6)-(1,2-dicarboxyethyl)-AMP + GDP + phosphate + 2 H(+). It participates in purine metabolism; AMP biosynthesis via de novo pathway; AMP from IMP: step 1/2. Functionally, plays an important role in the de novo pathway of purine nucleotide biosynthesis. Catalyzes the first committed step in the biosynthesis of AMP from IMP. The sequence is that of Adenylosuccinate synthetase from Pseudomonas syringae pv. tomato (strain ATCC BAA-871 / DC3000).